Consider the following 567-residue polypeptide: Phosphoglucomutase-like protein 5 (567 aa).

The disordered stretch occupies residues 1–26 (MEGSPIPVLTVPTAPYEDQRPTGGGG). Position 120 is a phosphothreonine (T120). Position 122 is a phosphoserine (S122).

The protein belongs to the phosphohexose mutase family. In terms of assembly, interacts with DMD/dystrophin; the interaction is direct. Interacts with UTRN/utrophin.

Its subcellular location is the cell junction. It localises to the adherens junction. The protein localises to the cytoplasm. The protein resides in the cytoskeleton. It is found in the cell membrane. Its subcellular location is the sarcolemma. In terms of biological role, component of adherens-type cell-cell and cell-matrix junctions. Has no phosphoglucomutase activity in vitro. This is Phosphoglucomutase-like protein 5 from Mus musculus (Mouse).